We begin with the raw amino-acid sequence, 360 residues long: GDSL esterase/lipase At1g06990 (360 aa).

The signal sequence occupies residues 1 to 22 (MLIHVIIFMIITTMQFSTTCHA). N-linked (GlcNAc...) asparagine glycans are attached at residues N26 and N31. The Nucleophile role is filled by S44. N73, N126, and N272 each carry an N-linked (GlcNAc...) asparagine glycan. Active-site residues include D335 and H338.

It belongs to the 'GDSL' lipolytic enzyme family.

Its subcellular location is the secreted. This chain is GDSL esterase/lipase At1g06990, found in Arabidopsis thaliana (Mouse-ear cress).